The following is a 215-amino-acid chain: Redox-sensing transcriptional repressor Rex (215 aa).

Positions Leu18–Phe57 form a DNA-binding region, H-T-H motif. Gly92 to Gly97 is a binding site for NAD(+).

The protein belongs to the transcriptional regulatory Rex family. Homodimer.

It is found in the cytoplasm. Modulates transcription in response to changes in cellular NADH/NAD(+) redox state. The protein is Redox-sensing transcriptional repressor Rex of Listeria innocua serovar 6a (strain ATCC BAA-680 / CLIP 11262).